Consider the following 192-residue polypeptide: 7-methyl-GTP pyrophosphatase (192 aa).

D69 acts as the Proton acceptor in catalysis.

It belongs to the Maf family. YceF subfamily. Requires a divalent metal cation as cofactor.

The protein localises to the cytoplasm. The catalysed reaction is N(7)-methyl-GTP + H2O = N(7)-methyl-GMP + diphosphate + H(+). Its function is as follows. Nucleoside triphosphate pyrophosphatase that hydrolyzes 7-methyl-GTP (m(7)GTP). May have a dual role in cell division arrest and in preventing the incorporation of modified nucleotides into cellular nucleic acids. The sequence is that of 7-methyl-GTP pyrophosphatase from Pseudomonas syringae pv. syringae (strain B728a).